The primary structure comprises 382 residues: G-box-binding factor 3 (382 aa).

A compositionally biased stretch (basic and acidic residues) spans 1 to 16 (MGNSSEEPKPPTKSDK). 3 disordered regions span residues 1-26 (MGNSSEEPKPPTKSDKPSSPPVDQTN), 97-221 (MGSL…GVKL), and 257-285 (ERELKRERRKQSNRESARRSRLRKQAETE). The segment covering 111–130 (TPGTLLSIDTPTKSTGNTDN) has biased composition (polar residues). A compositionally biased stretch (basic and acidic residues) spans 155 to 165 (ADEHKRSRNSS). Over residues 166 to 181 (ETDGSTDGSDGNTTGA) the composition is skewed to low complexity. Residues 182-199 (DEPKLKRSREGTPTKDGK) show a composition bias toward basic and acidic residues. Positions 202-216 (VQASSFHSVSPSSGD) are enriched in polar residues. The region spanning 259–322 (ELKRERRKQS…DKLRGANATL (64 aa)) is the bZIP domain. Residues 261-280 (KRERRKQSNRESARRSRLRK) form a basic motif region. The segment at 287-322 (LARKVEALTAENMALRSELNQLNEKSDKLRGANATL) is leucine-zipper. The disordered stretch occupies residues 329 to 382 (SEPEKRVPANMLSRVKNSGAGDKNKNQGDNDSNSTSKLHQLLDTKPRAKAVAAG). Over residues 357-366 (DNDSNSTSKL) the composition is skewed to polar residues.

Belongs to the bZIP family. As to quaternary structure, DNA-binding heterodimer. Interacts with GBF4. Interacts with BZIP16 and BZIP68. As to expression, present only in dark grown leaves and roots.

It is found in the nucleus. Its function is as follows. Binds to the G-box motif (5'-CCACGTGG-3') of the rbcS-1A gene promoter. G-box and G-box-like motifs are cis-acting elements defined in promoters of certain plant genes which are regulated by such diverse stimuli as light-induction or hormone control. This chain is G-box-binding factor 3 (GBF3), found in Arabidopsis thaliana (Mouse-ear cress).